The sequence spans 70 residues: Large ribosomal subunit protein bL31 (70 aa).

Residues Cys-16, Cys-18, Cys-38, and Cys-41 each coordinate Zn(2+).

The protein belongs to the bacterial ribosomal protein bL31 family. Type A subfamily. As to quaternary structure, part of the 50S ribosomal subunit. The cofactor is Zn(2+).

In terms of biological role, binds the 23S rRNA. This chain is Large ribosomal subunit protein bL31, found in Vesicomyosocius okutanii subsp. Calyptogena okutanii (strain HA).